We begin with the raw amino-acid sequence, 416 residues long: Vacuole membrane protein KMS1 (416 aa).

At glycine 2 the chain carries N-acetylglycine. Residues 2–60 are Cytoplasmic-facing; sequence GSAGVASSSSDVAISALREKHEKEVENLTLTTQPLNTLKLFVEATIQYIKRSISYLLAH. The chain crosses the membrane as a helical span at residues 61-81; it reads GGWFILITTLLVVSGGLLVTV. Topologically, residues 82–101 are lumenal; sequence DGPHGKHVEEVLEYVRYGLW. Residues 102–124 form a helical membrane-spanning segment; that stretch reads WIALGVASSIGLGSGLHTFVLYL. Residues 125-257 are Cytoplasmic-facing; sequence GPHIALFTLK…WLLTHSQHLN (133 aa). Residues 258–278 form a helical membrane-spanning segment; it reads FFTVLVLASVPNPLFDLAGIM. Residues 279–289 lie on the Lumenal side of the membrane; it reads CGQFGIPFWEF. Residues 290-312 traverse the membrane as a helical segment; sequence FLATLIGKAIIKTHIQTIFIICV. Topologically, residues 313 to 323 are cytoplasmic; sequence CNNQLLDWMEN. A helical membrane pass occupies residues 324-344; it reads ELIWILSHVPGLASMLPGLTA. The Lumenal portion of the chain corresponds to 345-372; sequence KLHAMKEKYIDAPSPVPSHIKVKKWDFS. Residues 373-393 traverse the membrane as a helical segment; it reads FASIWNGIVWLMLLNFFVKIV. Over 394-416 the chain is Cytoplasmic; the sequence is TATAQRHLKKKQEKEMATLTHSD.

Belongs to the VMP1 family.

It localises to the endoplasmic reticulum membrane. Its function is as follows. Involved in the early secretory pathway. Required for the correct export of secretory products from the endoplasmic reticulum (ER) and involved in the maintenance of ER integrity. The protein is Vacuole membrane protein KMS1 of Arabidopsis thaliana (Mouse-ear cress).